Consider the following 544-residue polypeptide: Chaperonin GroEL (544 aa).

Residues 29-32, Lys-50, 86-90, Gly-414, 477-479, and Asp-493 contribute to the ATP site; these read TLGP, DGTTT, and DAA.

The protein belongs to the chaperonin (HSP60) family. Forms a cylinder of 14 subunits composed of two heptameric rings stacked back-to-back. Interacts with the co-chaperonin GroES.

Its subcellular location is the cytoplasm. It catalyses the reaction ATP + H2O + a folded polypeptide = ADP + phosphate + an unfolded polypeptide.. Functionally, together with its co-chaperonin GroES, plays an essential role in assisting protein folding. The GroEL-GroES system forms a nano-cage that allows encapsulation of the non-native substrate proteins and provides a physical environment optimized to promote and accelerate protein folding. The protein is Chaperonin GroEL of Hydrogenovibrio crunogenus (strain DSM 25203 / XCL-2) (Thiomicrospira crunogena).